The following is a 712-amino-acid chain: Polyphosphate kinase (712 aa).

Position 49 (Asn-49) interacts with ATP. Mg(2+) contacts are provided by Arg-398 and Arg-428. Residue His-458 is the Phosphohistidine intermediate of the active site. Residues Tyr-491, Arg-587, and His-615 each contribute to the ATP site.

It belongs to the polyphosphate kinase 1 (PPK1) family. Mg(2+) is required as a cofactor. In terms of processing, an intermediate of this reaction is the autophosphorylated ppk in which a phosphate is covalently linked to a histidine residue through a N-P bond.

It catalyses the reaction [phosphate](n) + ATP = [phosphate](n+1) + ADP. Its function is as follows. Catalyzes the reversible transfer of the terminal phosphate of ATP to form a long-chain polyphosphate (polyP). The sequence is that of Polyphosphate kinase from Parasynechococcus marenigrum (strain WH8102).